The chain runs to 617 residues: KIF-binding protein (617 aa).

The segment at 48-83 (ALLGPAPEDDDERAADDGPVDQALGAGEPRDAEGPG) is disordered. Serine 174 is subject to Phosphoserine.

This sequence belongs to the KIF-binding protein family. As to quaternary structure, interacts with KIF1B; positively regulates KIF1B microtubule motor activity. Interacts with STMN2.

The protein resides in the cytoplasm. The protein localises to the cytoskeleton. Functionally, activator of KIF1B plus-end-directed microtubule motor activity. Required for organization of axonal microtubules, and axonal outgrowth and maintenance during peripheral and central nervous system development. The chain is KIF-binding protein (Kifbp) from Rattus norvegicus (Rat).